The chain runs to 148 residues: Arginine repressor (148 aa).

The protein belongs to the ArgR family.

The protein resides in the cytoplasm. Its pathway is amino-acid biosynthesis; L-arginine biosynthesis [regulation]. Functionally, regulates arginine biosynthesis genes. This is Arginine repressor from Chlorobium phaeobacteroides (strain BS1).